The primary structure comprises 502 residues: Lysine--tRNA ligase (502 aa).

The Mg(2+) site is built by E413 and E420.

It belongs to the class-II aminoacyl-tRNA synthetase family. As to quaternary structure, homodimer. Mg(2+) is required as a cofactor.

The protein resides in the cytoplasm. It carries out the reaction tRNA(Lys) + L-lysine + ATP = L-lysyl-tRNA(Lys) + AMP + diphosphate. The protein is Lysine--tRNA ligase of Haemophilus influenzae (strain PittEE).